Consider the following 604-residue polypeptide: Glutamine--fructose-6-phosphate aminotransferase [isomerizing] (604 aa).

The Nucleophile; for GATase activity role is filled by cysteine 2. The 217-residue stretch at 2-218 (CGIVGVVGNT…DKELVIVKKD (217 aa)) folds into the Glutamine amidotransferase type-2 domain. SIS domains follow at residues 284 to 423 (IIKS…ANGK) and 456 to 594 (VEQL…VDKP). Residue lysine 599 is the For Fru-6P isomerization activity of the active site.

In terms of assembly, homodimer.

Its subcellular location is the cytoplasm. It carries out the reaction D-fructose 6-phosphate + L-glutamine = D-glucosamine 6-phosphate + L-glutamate. Functionally, catalyzes the first step in hexosamine metabolism, converting fructose-6P into glucosamine-6P using glutamine as a nitrogen source. The protein is Glutamine--fructose-6-phosphate aminotransferase [isomerizing] of Streptococcus agalactiae serotype III (strain NEM316).